A 298-amino-acid polypeptide reads, in one-letter code: tRNA (guanine(9)-N1)-methyltransferase (298 aa).

Residues 1–10 (MSDTSENSNA) are compositionally biased toward polar residues. The disordered stretch occupies residues 1-44 (MSDTSENSNAEIPADTSDVKDKPKPIVRAPQFPPPPEGISKSQW). One can recognise an SAM-dependent MTase TRM10-type domain in the interval 96 to 285 (PPKVNLNQSD…SVLPPRKLEV (190 aa)). Residues 192–193 (LT), G212, 216–220 (DKNRH), C224, L238, and 250–252 (KVL) contribute to the S-adenosyl-L-methionine site. The active-site Proton acceptor is D216.

The protein belongs to the class IV-like SAM-binding methyltransferase superfamily. TRM10 family. In terms of assembly, monomer.

It localises to the cytoplasm. Its subcellular location is the nucleus. The enzyme catalyses guanosine(9) in tRNA + S-adenosyl-L-methionine = N(1)-methylguanosine(9) in tRNA + S-adenosyl-L-homocysteine + H(+). Functionally, S-adenosyl-L-methionine-dependent guanine N(1)-methyltransferase that catalyzes the formation of N(1)-methylguanine at position 9 (m1G9) in cytoplasmic tRNA. The protein is tRNA (guanine(9)-N1)-methyltransferase of Kluyveromyces lactis (strain ATCC 8585 / CBS 2359 / DSM 70799 / NBRC 1267 / NRRL Y-1140 / WM37) (Yeast).